We begin with the raw amino-acid sequence, 162 residues long: MLEDLRANSWSLRPCCMVLAYRVAHFCSVWRKKNVLNNLWAAPLLVLYRIITECFFGYEIQAAATIGRRFTIHHGYAVVINKNVVAGDDFTIRHGVTIGNRGADNMACPHIGNGVELGANVIILGDITLGNNVTVGAGSVVLDSVPDNALVVGEKARVKVIK.

The protein belongs to the transferase hexapeptide repeat family.

Its pathway is slime biogenesis; slime polysaccharide biosynthesis. In Escherichia coli O157:H7, this protein is Putative colanic acid biosynthesis acetyltransferase WcaB (wcaB).